Here is a 413-residue protein sequence, read N- to C-terminus: NAD-dependent dihydropyrimidine dehydrogenase subunit PreT (413 aa).

E287 is an NAD(+) binding site.

It belongs to the NADH dehydrogenase family. Heterotetramer of 2 PreA and 2 PreT subunits.

The catalysed reaction is 5,6-dihydrouracil + NAD(+) = uracil + NADH + H(+). The enzyme catalyses 5,6-dihydrothymine + NAD(+) = thymine + NADH + H(+). In terms of biological role, involved in pyrimidine base degradation. Catalyzes physiologically the reduction of uracil to 5,6-dihydrouracil (DHU) by using NADH as a specific cosubstrate. It also catalyzes the reverse reaction and the reduction of thymine to 5,6-dihydrothymine (DHT). The sequence is that of NAD-dependent dihydropyrimidine dehydrogenase subunit PreT (preT) from Salmonella typhimurium (strain LT2 / SGSC1412 / ATCC 700720).